A 507-amino-acid polypeptide reads, in one-letter code: ATP synthase subunit alpha, plastid (507 aa).

170–177 (GDRQTGKT) contacts ATP.

Belongs to the ATPase alpha/beta chains family. F-type ATPases have 2 components, CF(1) - the catalytic core - and CF(0) - the membrane proton channel. CF(1) has five subunits: alpha(3), beta(3), gamma(1), delta(1), epsilon(1). CF(0) has four main subunits: a, b, b' and c.

Its subcellular location is the plastid membrane. It catalyses the reaction ATP + H2O + 4 H(+)(in) = ADP + phosphate + 5 H(+)(out). Its function is as follows. Produces ATP from ADP in the presence of a proton gradient across the membrane. The alpha chain is a regulatory subunit. The polypeptide is ATP synthase subunit alpha, plastid (Cuscuta obtusiflora (Peruvian dodder)).